The chain runs to 332 residues: UPF0194 membrane protein YbhG (332 aa).

The first 16 residues, 1 to 16, serve as a signal peptide directing secretion; the sequence is MMKKPVVIGLAVVVLA. Positions 108–209 form a coiled coil; that stretch reads EEIAQAAAAV…LNLQDSTLIA (102 aa).

The protein belongs to the UPF0194 family.

It is found in the periplasm. This chain is UPF0194 membrane protein YbhG, found in Escherichia coli O127:H6 (strain E2348/69 / EPEC).